The following is an 86-amino-acid chain: Small ribosomal subunit protein bS20 (86 aa).

Residues 1-27 (MANSKQAKKRAGQSEKRRQHNASRRSM) form a disordered region.

This sequence belongs to the bacterial ribosomal protein bS20 family.

Binds directly to 16S ribosomal RNA. The protein is Small ribosomal subunit protein bS20 of Colwellia psychrerythraea (strain 34H / ATCC BAA-681) (Vibrio psychroerythus).